The following is a 64-amino-acid chain: Prokaryotic ubiquitin-like protein Pup (64 aa).

The interval 1–32 is disordered; that stretch reads MNAKQTQIMGGGGRDEDNAEDSAQASGQVQIN. Positions 20–58 are ARC ATPase binding; it reads EDSAQASGQVQINTEGVDSLLDEIDGLLENNAEEFVRSY. The segment covering 21–32 has biased composition (polar residues); sequence DSAQASGQVQIN. Residue Glu64 forms an Isoglutamyl lysine isopeptide (Glu-Lys) (interchain with K-? in acceptor proteins) linkage.

Belongs to the prokaryotic ubiquitin-like protein family. In terms of assembly, strongly interacts with the proteasome-associated ATPase ARC through a hydrophobic interface; the interacting region of Pup lies in its C-terminal half. There is one Pup binding site per ARC hexamer ring.

It participates in protein degradation; proteasomal Pup-dependent pathway. Protein modifier that is covalently attached to lysine residues of substrate proteins, thereby targeting them for proteasomal degradation. The tagging system is termed pupylation. The protein is Prokaryotic ubiquitin-like protein Pup of Corynebacterium glutamicum (strain R).